Here is a 122-residue protein sequence, read N- to C-terminus: Large ribosomal subunit protein uL24 (122 aa).

Residues 43–64 form a disordered region; the sequence is IRKHHRRDMPTPQGGTTKGGII.

The protein belongs to the universal ribosomal protein uL24 family. In terms of assembly, part of the 50S ribosomal subunit.

One of two assembly initiator proteins, it binds directly to the 5'-end of the 23S rRNA, where it nucleates assembly of the 50S subunit. Its function is as follows. One of the proteins that surrounds the polypeptide exit tunnel on the outside of the subunit. The sequence is that of Large ribosomal subunit protein uL24 from Cutibacterium acnes (strain DSM 16379 / KPA171202) (Propionibacterium acnes).